The sequence spans 470 residues: Siroheme synthase (470 aa).

The tract at residues 1–203 (MEFFPIFLKL…GDEAAARAEM (203 aa)) is precorrin-2 dehydrogenase /sirohydrochlorin ferrochelatase. NAD(+) contacts are provided by residues 22 to 23 (EV) and 43 to 44 (PE). Residue Ser128 is modified to Phosphoserine. Residues 216-470 (GAVYLVGAGP…ENSAVTIQED (255 aa)) form a uroporphyrinogen-III C-methyltransferase region. An S-adenosyl-L-methionine-binding site is contributed by Pro225. Catalysis depends on Asp248, which acts as the Proton acceptor. Lys270 functions as the Proton donor in the catalytic mechanism. S-adenosyl-L-methionine contacts are provided by residues 301–303 (GGD), Met383, and Ala412.

The protein in the N-terminal section; belongs to the precorrin-2 dehydrogenase / sirohydrochlorin ferrochelatase family. This sequence in the C-terminal section; belongs to the precorrin methyltransferase family.

It carries out the reaction uroporphyrinogen III + 2 S-adenosyl-L-methionine = precorrin-2 + 2 S-adenosyl-L-homocysteine + H(+). The enzyme catalyses precorrin-2 + NAD(+) = sirohydrochlorin + NADH + 2 H(+). It catalyses the reaction siroheme + 2 H(+) = sirohydrochlorin + Fe(2+). The protein operates within cofactor biosynthesis; adenosylcobalamin biosynthesis; precorrin-2 from uroporphyrinogen III: step 1/1. Its pathway is cofactor biosynthesis; adenosylcobalamin biosynthesis; sirohydrochlorin from precorrin-2: step 1/1. It participates in porphyrin-containing compound metabolism; siroheme biosynthesis; precorrin-2 from uroporphyrinogen III: step 1/1. It functions in the pathway porphyrin-containing compound metabolism; siroheme biosynthesis; siroheme from sirohydrochlorin: step 1/1. The protein operates within porphyrin-containing compound metabolism; siroheme biosynthesis; sirohydrochlorin from precorrin-2: step 1/1. Multifunctional enzyme that catalyzes the SAM-dependent methylations of uroporphyrinogen III at position C-2 and C-7 to form precorrin-2 via precorrin-1. Then it catalyzes the NAD-dependent ring dehydrogenation of precorrin-2 to yield sirohydrochlorin. Finally, it catalyzes the ferrochelation of sirohydrochlorin to yield siroheme. The chain is Siroheme synthase from Chromobacterium violaceum (strain ATCC 12472 / DSM 30191 / JCM 1249 / CCUG 213 / NBRC 12614 / NCIMB 9131 / NCTC 9757 / MK).